Consider the following 143-residue polypeptide: Ribonuclease P protein component 2 (143 aa).

Belongs to the eukaryotic/archaeal RNase P protein component 2 family. In terms of assembly, consists of a catalytic RNA component and at least 4-5 protein subunits.

Its subcellular location is the cytoplasm. The enzyme catalyses Endonucleolytic cleavage of RNA, removing 5'-extranucleotides from tRNA precursor.. Its function is as follows. Part of ribonuclease P, a protein complex that generates mature tRNA molecules by cleaving their 5'-ends. The protein is Ribonuclease P protein component 2 of Saccharolobus islandicus (strain Y.N.15.51 / Yellowstone #2) (Sulfolobus islandicus).